Consider the following 253-residue polypeptide: Sugar fermentation stimulation protein homolog (253 aa).

This sequence belongs to the SfsA family.

In Prochlorococcus marinus (strain NATL1A), this protein is Sugar fermentation stimulation protein homolog.